Reading from the N-terminus, the 437-residue chain is Purple acid phosphatase 18 (437 aa).

The signal sequence occupies residues 1–23 (MEKWGILLLVTLSVSIIFTSAAA). Residues aspartate 148, aspartate 175, and tyrosine 178 each coordinate Fe cation. Residue aspartate 175 participates in Zn(2+) binding. Zn(2+) is bound by residues asparagine 208 and histidine 291. A substrate-binding site is contributed by asparagine 208. Histidine 301 functions as the Proton donor in the catalytic mechanism. Position 328 (histidine 328) interacts with Zn(2+). 328–330 (HVH) is a substrate binding site. Residue histidine 330 participates in Fe cation binding. Asparagine 390 carries N-linked (GlcNAc...) asparagine glycosylation.

The protein belongs to the metallophosphoesterase superfamily. Purple acid phosphatase family. As to quaternary structure, homodimer. It depends on Fe cation as a cofactor. Requires Zn(2+) as cofactor. In terms of tissue distribution, expressed in roots, stems, leaves, flowers and siliques.

It localises to the secreted. It catalyses the reaction a phosphate monoester + H2O = an alcohol + phosphate. The chain is Purple acid phosphatase 18 (PAP18) from Arabidopsis thaliana (Mouse-ear cress).